The primary structure comprises 261 residues: 5'-nucleotidase SurE (261 aa).

A divalent metal cation contacts are provided by Asp8, Asp9, Ser40, and Asn94.

It belongs to the SurE nucleotidase family. A divalent metal cation serves as cofactor.

The protein localises to the cytoplasm. The catalysed reaction is a ribonucleoside 5'-phosphate + H2O = a ribonucleoside + phosphate. Functionally, nucleotidase that shows phosphatase activity on nucleoside 5'-monophosphates. In Anaplasma marginale (strain Florida), this protein is 5'-nucleotidase SurE.